Consider the following 610-residue polypeptide: Protein Smaug homolog 1 (610 aa).

Serine 67 is subject to Phosphoserine. 3 disordered regions span residues 177-222 (ARGP…EEGS), 318-366 (SSPS…LQPP), and 464-487 (NRGF…GRRN). Residues 222–295 (SGMKDVPAWL…LKSLERDIIE (74 aa)) form the SAM domain. At serine 319 the chain carries Phosphoserine. Threonine 323 is modified (phosphothreonine). Residues 344–358 (SAATVTSATASASAG) are compositionally biased toward low complexity. Arginine 465 is modified (omega-N-methylarginine). The span at 467 to 480 (FGQSNSLPTASSVG) shows a compositional bias: polar residues. Serine 472 bears the Phosphoserine mark.

This sequence belongs to the SMAUG family. As to expression, expressed in brain (at protein level).

It localises to the cytoplasm. Its subcellular location is the cell projection. It is found in the dendrite. The protein localises to the synapse. The protein resides in the synaptosome. Functionally, acts as a translational repressor of SRE-containing messengers. This Rattus norvegicus (Rat) protein is Protein Smaug homolog 1 (Samd4a).